Reading from the N-terminus, the 199-residue chain is Large ribosomal subunit protein bL17 (199 aa).

Positions 123–199 (DEANRARRAA…EESEAKDDTK (77 aa)) are disordered. Residues 137–152 (KADERADEKADEKAEE) are compositionally biased toward basic and acidic residues. The segment covering 153 to 199 (TVEETTEAPAEESTEAAAEETVEETTEAPAEESTEAAEESEAKDDTK) has biased composition (acidic residues).

Belongs to the bacterial ribosomal protein bL17 family. As to quaternary structure, part of the 50S ribosomal subunit. Contacts protein L32.

This Mycolicibacterium smegmatis (strain ATCC 700084 / mc(2)155) (Mycobacterium smegmatis) protein is Large ribosomal subunit protein bL17.